The following is a 437-amino-acid chain: AA9 family lytic polysaccharide monooxygenase H (437 aa).

An N-terminal signal peptide occupies residues 1–21; the sequence is MNLSLFTLALVACYSSQLAAA. His22 lines the Cu(2+) pocket. Cysteines 64 and 193 form a disulfide. N-linked (GlcNAc...) asparagine glycans are attached at residues Asn67 and Asn79. A Cu(2+)-binding site is contributed by His104. N-linked (GlcNAc...) asparagine glycosylation is found at Asn120 and Asn138. Residues His178 and Gln188 each coordinate O2. Tyr190 is a binding site for Cu(2+). 2 N-linked (GlcNAc...) asparagine glycosylation sites follow: Asn252 and Asn307. The Chitin-binding type-1 domain maps to 392–437; sequence DGKCGDGNGQTCKGSLLGECCSQVGYCGSSESYCGVGCQGNFGVCG. Disulfide bonds link Cys395-Cys412, Cys403-Cys418, Cys411-Cys425, and Cys429-Cys436.

Belongs to the polysaccharide monooxygenase AA9 family. Cu(2+) is required as a cofactor.

The protein localises to the secreted. It catalyses the reaction [(1-&gt;4)-beta-D-glucosyl]n+m + reduced acceptor + O2 = 4-dehydro-beta-D-glucosyl-[(1-&gt;4)-beta-D-glucosyl]n-1 + [(1-&gt;4)-beta-D-glucosyl]m + acceptor + H2O.. Functionally, lytic polysaccharide monooxygenase (LPMO) that depolymerizes crystalline and amorphous polysaccharides via the oxidation of scissile alpha- or beta-(1-4)-glycosidic bonds, yielding C1 and C4 oxidation products. Catalysis by LPMOs requires the reduction of the active-site copper from Cu(II) to Cu(I) by a reducing agent and H(2)O(2) or O(2) as a cosubstrate. In Botryotinia fuckeliana (strain B05.10) (Noble rot fungus), this protein is AA9 family lytic polysaccharide monooxygenase H.